The primary structure comprises 129 residues: SOSS complex subunit C homolog (129 aa).

Residues 105 to 129 (RLEPLPSPATTPTTPNAPPSHNISK) form a disordered region.

This sequence belongs to the SOSS-C family.

In Drosophila erecta (Fruit fly), this protein is SOSS complex subunit C homolog.